The following is a 299-amino-acid chain: Coenzyme PQQ synthesis protein B (299 aa).

Belongs to the PqqB family.

It functions in the pathway cofactor biosynthesis; pyrroloquinoline quinone biosynthesis. Functionally, may be involved in the transport of PQQ or its precursor to the periplasm. This chain is Coenzyme PQQ synthesis protein B, found in Methylorubrum extorquens (strain ATCC 14718 / DSM 1338 / JCM 2805 / NCIMB 9133 / AM1) (Methylobacterium extorquens).